Consider the following 390-residue polypeptide: Substance-K receptor (390 aa).

The Extracellular segment spans residues 1–32; it reads MGTRAIVSDANILSGLESNATGVTAFSMPGWQ. The N-linked (GlcNAc...) asparagine glycan is linked to asparagine 19. The chain crosses the membrane as a helical span at residues 33–56; the sequence is LALWATAYLALVLVAVTGNATVIW. Over 57–69 the chain is Cytoplasmic; sequence IILAHERMRTVTN. A helical transmembrane segment spans residues 70-90; sequence YFIINLALADLCMAAFNATFN. Residues 91 to 107 are Extracellular-facing; it reads FIYASHNIWYFGRAFCY. A disulfide bridge connects residues cysteine 106 and cysteine 181. Residues 108–129 form a helical membrane-spanning segment; that stretch reads FQNLFPITAMFVSIYSMTAIAA. Over 130–149 the chain is Cytoplasmic; sequence DRYMAIVHPFQPRLSAPSTK. Residues 150 to 170 traverse the membrane as a helical segment; it reads AIIAGIWLVALALASPQCFYS. The Extracellular segment spans residues 171 to 196; sequence TITVDEGATKCVVAWPNDNGGKMLLL. A helical membrane pass occupies residues 197 to 218; the sequence is YHLVVFVLIYFLPLLVMFGAYS. At 219–251 the chain is on the cytoplasmic side; that stretch reads VIGLTLWKRAVPRHQAHGANLRHLQAKKKFVKA. Residues 252–272 traverse the membrane as a helical segment; sequence MVLVVLTFAICWLPYHLYFIL. Residues 273–290 are Extracellular-facing; sequence GTFQEDIYYHKFIQQVYL. The helical transmembrane segment at 291 to 310 threads the bilayer; it reads ALFWLAMSSTMYNPIIYCCL. Topologically, residues 311 to 390 are cytoplasmic; the sequence is NHRFRSGFRL…PAGPICKAQA (80 aa). Cysteine 324 carries the S-palmitoyl cysteine lipid modification. The disordered stretch occupies residues 365-390; it reads HSEATNGQVGSPQDGEPAGPICKAQA. The segment covering 366–375 has biased composition (polar residues); it reads SEATNGQVGS.

Belongs to the G-protein coupled receptor 1 family.

Its subcellular location is the cell membrane. Its function is as follows. This is a receptor for the tachykinin neuropeptide substance K (neurokinin A). It is associated with G proteins that activate a phosphatidylinositol-calcium second messenger system. The rank order of affinity of this receptor to tachykinins is: substance K &gt; neuromedin-K &gt; substance P. The polypeptide is Substance-K receptor (Tacr2) (Rattus norvegicus (Rat)).